Consider the following 334-residue polypeptide: Replication factor C subunit 4 (334 aa).

Position 55 to 62 (55 to 62) interacts with ATP; sequence GPPGTGKT.

It belongs to the activator 1 small subunits family. In terms of assembly, heteropentamer of various rfc subunits that forms a complex (RFC) with PCNA in the presence of ATP.

The protein localises to the nucleus. In terms of biological role, the elongation of primed DNA templates by DNA polymerase delta and epsilon requires the action of the accessory proteins PCNA and activator 1. This subunit may be involved in the elongation of the multiprimed DNA template. The polypeptide is Replication factor C subunit 4 (rfc-4) (Caenorhabditis elegans).